A 282-amino-acid polypeptide reads, in one-letter code: MPPWFRREKAGIRTTREEQNEMPEGQWVKCPETGEITNRRELEENLLVFPGSGYHFGMDSHQYFGFLFDDGDYDLHDTDLRSVDALNFEDRKPYSQRLESAVEETGQNEAVQAATGSVGGHPVSMAGMDFSFIGGSMGSVVGETVARAIKRAYTEGMPLITIAQSGGARMMEGALSLMQMAKTSAHLTRLDEAGLPFISILTHPTTGGVTASFAMLGDIHIAEPDALIGFAGPRVIRETIGSDLPEGFQKSEFLQEHGFVDMIVDRRRLRRRIIRLLNLLME.

The CoA carboxyltransferase N-terminal domain occupies glutamine 26–glutamate 282.

The protein belongs to the AccD/PCCB family. In terms of assembly, acetyl-CoA carboxylase is a heterohexamer composed of biotin carboxyl carrier protein (AccB), biotin carboxylase (AccC) and two subunits each of ACCase subunit alpha (AccA) and ACCase subunit beta (AccD).

The protein localises to the cytoplasm. The enzyme catalyses N(6)-carboxybiotinyl-L-lysyl-[protein] + acetyl-CoA = N(6)-biotinyl-L-lysyl-[protein] + malonyl-CoA. Its pathway is lipid metabolism; malonyl-CoA biosynthesis; malonyl-CoA from acetyl-CoA: step 1/1. Functionally, component of the acetyl coenzyme A carboxylase (ACC) complex. Biotin carboxylase (BC) catalyzes the carboxylation of biotin on its carrier protein (BCCP) and then the CO(2) group is transferred by the transcarboxylase to acetyl-CoA to form malonyl-CoA. The polypeptide is Acetyl-coenzyme A carboxylase carboxyl transferase subunit beta (Salinibacter ruber (strain DSM 13855 / M31)).